Reading from the N-terminus, the 247-residue chain is DNA repair protein RecO (247 aa).

This sequence belongs to the RecO family.

Functionally, involved in DNA repair and RecF pathway recombination. The polypeptide is DNA repair protein RecO (Alkalilimnicola ehrlichii (strain ATCC BAA-1101 / DSM 17681 / MLHE-1)).